We begin with the raw amino-acid sequence, 26 residues long: Hemocyanin subunit B (26 aa).

This sequence belongs to the tyrosinase family. Hemocyanin subfamily. In terms of tissue distribution, hemolymph.

The protein localises to the secreted. It is found in the extracellular space. Hemocyanins are copper-containing oxygen carriers occurring freely dissolved in the hemolymph of many mollusks and arthropods. The sequence is that of Hemocyanin subunit B from Carcinus maenas (Common shore crab).